Here is a 141-residue protein sequence, read N- to C-terminus: Nucleoside triphosphatase NudI (141 aa).

The Nudix hydrolase domain occupies 1-141 (MRQRTIVCPL…RHTLALKGLL (141 aa)). The Nudix box signature appears at 38 to 59 (GGVEPGERIEEALRREIREELG).

Belongs to the Nudix hydrolase family. NudI subfamily. In terms of assembly, monomer. Mg(2+) serves as cofactor.

The enzyme catalyses a ribonucleoside 5'-triphosphate + H2O = a ribonucleoside 5'-phosphate + diphosphate + H(+). It carries out the reaction a 2'-deoxyribonucleoside 5'-triphosphate + H2O = a 2'-deoxyribonucleoside 5'-phosphate + diphosphate + H(+). The catalysed reaction is dUTP + H2O = dUMP + diphosphate + H(+). It catalyses the reaction dTTP + H2O = dTMP + diphosphate + H(+). The enzyme catalyses dCTP + H2O = dCMP + diphosphate + H(+). Catalyzes the hydrolysis of nucleoside triphosphates, with a preference for pyrimidine deoxynucleoside triphosphates (dUTP, dTTP and dCTP). This is Nucleoside triphosphatase NudI from Salmonella paratyphi B (strain ATCC BAA-1250 / SPB7).